The sequence spans 459 residues: Glutamate--tRNA ligase 2 (459 aa).

The short motif at 8-18 (PSPTGYLHIGG) is the 'HIGH' region element. The 'KMSKS' region motif lies at 237 to 241 (KLSKR). An ATP-binding site is contributed by lysine 240.

Belongs to the class-I aminoacyl-tRNA synthetase family. Glutamate--tRNA ligase type 1 subfamily. As to quaternary structure, monomer.

It is found in the cytoplasm. It catalyses the reaction tRNA(Glu) + L-glutamate + ATP = L-glutamyl-tRNA(Glu) + AMP + diphosphate. Functionally, catalyzes the attachment of glutamate to tRNA(Glu) in a two-step reaction: glutamate is first activated by ATP to form Glu-AMP and then transferred to the acceptor end of tRNA(Glu). The chain is Glutamate--tRNA ligase 2 from Campylobacter curvus (strain 525.92).